The primary structure comprises 352 residues: Protein Wnt-2 (352 aa).

Residues 1 to 23 (MWKIHNKLLIYILWIMEIRLVSS) form the signal peptide. Intrachain disulfides connect Cys-65/Cys-76, Cys-115/Cys-123, Cys-125/Cys-148, Cys-196/Cys-210, Cys-198/Cys-205, Cys-281/Cys-312, Cys-297/Cys-307, Cys-311/Cys-351, Cys-327/Cys-342, Cys-329/Cys-339, and Cys-334/Cys-335. N-linked (GlcNAc...) asparagine glycosylation is found at Asn-75 and Asn-119. The O-palmitoleoyl serine; by PORCN moiety is linked to residue Ser-202.

Belongs to the Wnt family. Post-translationally, palmitoleoylated by porcupine. The lipid group functions as a sorting signal, targeting the ligand to polarized vesicles that transport Wnt2 to unique sites at the cell surface. Depalmitoleoylated by notum, leading to inhibit Wnt signaling pathway. As to expression, dynamic expression pattern during embryogenesis. Expression is predominantly segmented, with expression also seen in the limb primordia and presumptive gonads. In embryonic tracheal cells, expression is close to and dorsal to the tracheal placode.

The protein localises to the secreted. The protein resides in the extracellular space. Its subcellular location is the extracellular matrix. Binds as a ligand to a family of frizzled seven-transmembrane receptors and acts through a cascade of genes on the nucleus. Segment polarity protein. May function in gonadogenesis and limb development. Wg and Wnt2 have a role in the developing trachea and together are responsible for all dorsal trunk formation. The chain is Protein Wnt-2 (Wnt2) from Drosophila melanogaster (Fruit fly).